Here is a 441-residue protein sequence, read N- to C-terminus: Protein disulfide isomerase-like 2-3 (441 aa).

An N-terminal signal peptide occupies residues 1–18; that stretch reads MRPAVAAALLLVAAAVAA. Thioredoxin domains lie at 19–139 and 159–276; these read SPVS…ALLR and SEKT…ANAA. Active-site nucleophile residues include cysteine 59 and cysteine 62. A disulfide bridge connects residues cysteine 59 and cysteine 62. The interval 143–166 is disordered; it reads NGKTSAGSGGKKSGGSSEKTEPSA. Residues cysteine 195 and cysteine 198 each act as nucleophile in the active site. A disulfide bond links cysteine 195 and cysteine 198.

This sequence belongs to the protein disulfide isomerase family.

It is found in the endoplasmic reticulum lumen. It catalyses the reaction Catalyzes the rearrangement of -S-S- bonds in proteins.. In terms of biological role, acts as a protein-folding catalyst that interacts with nascent polypeptides to catalyze the formation, isomerization, and reduction or oxidation of disulfide bonds. May play a role in storage protein biogenesis. In Oryza sativa subsp. japonica (Rice), this protein is Protein disulfide isomerase-like 2-3 (PDIL2-3).